A 469-amino-acid chain; its full sequence is MAPVMRLGSAALRSSIHLTSRQTAFTAARCYSSKTQTLKERFAELLPENIEKIKALRKEHGSKVVDKVTLDQVYGGARGIKCLVWEGSVLDAEEGIRFRGKTIPECQELLPKAPGGKEPLPEGLFWLLLTGEVPSEQQVRDLSAEWAARSDVPKFIEELIDRCPSDLHPMAQLSLAVTALEHTSSFARAYAKGINKKEYWGYTFEDSMDLIAKLPTIAARIYQNVFKGGKVAAVQKDKDYSFNFANQLGFGDNKDFVELLRLYLTIHTDHEGGNVSAHTTHLVGSALSSPFLSVAAGLNGLAGPLHGLANQEVLNWLTEMKKVIGDDLSDEAITKYLWDTLNAGRVVPGYGHAVLRKTDPRYSAQRKFAQEHLPEDPMFQLVSQVYKIAPKVLTEHGKTKNPYPNVDAHSGVLLQHYGLTEANYYTVLFGVSRAIGVLPQLIIDRAVGAPIERPKSYSTDKWIEICKKL.

Residues 1 to 33 (MAPVMRLGSAALRSSIHLTSRQTAFTAARCYSS) constitute a mitochondrion transit peptide. The active site involves His352.

Belongs to the citrate synthase family.

Its subcellular location is the mitochondrion matrix. It catalyses the reaction oxaloacetate + acetyl-CoA + H2O = citrate + CoA + H(+). It functions in the pathway carbohydrate metabolism; tricarboxylic acid cycle; isocitrate from oxaloacetate: step 1/2. This Neurospora crassa (strain ATCC 24698 / 74-OR23-1A / CBS 708.71 / DSM 1257 / FGSC 987) protein is Citrate synthase, mitochondrial (cit-1).